Here is a 305-residue protein sequence, read N- to C-terminus: Ornithine carbamoyltransferase, catabolic (305 aa).

Carbamoyl phosphate-binding positions include 50 to 53, Gln77, Arg101, and 128 to 131; these read STRT and HPLQ. Residues Asn159, Asp223, and 227-228 contribute to the L-ornithine site; that span reads SM. Carbamoyl phosphate-binding positions include 263-264 and Arg291; that span reads CL.

This sequence belongs to the aspartate/ornithine carbamoyltransferase superfamily. OTCase family.

It localises to the cytoplasm. The enzyme catalyses carbamoyl phosphate + L-ornithine = L-citrulline + phosphate + H(+). The protein operates within amino-acid degradation; L-arginine degradation via ADI pathway; carbamoyl phosphate from L-arginine: step 2/2. Its function is as follows. Reversibly catalyzes the transfer of the carbamoyl group from carbamoyl phosphate (CP) to the N(epsilon) atom of ornithine (ORN) to produce L-citrulline. The protein is Ornithine carbamoyltransferase, catabolic of Thermoplasma acidophilum (strain ATCC 25905 / DSM 1728 / JCM 9062 / NBRC 15155 / AMRC-C165).